The following is a 106-amino-acid chain: NADH-quinone oxidoreductase subunit K (106 aa).

The next 3 helical transmembrane spans lie at 10–30 (VTYI…GVLI), 34–54 (IVII…VFVT), and 67–87 (IVFF…ALVI).

Belongs to the complex I subunit 4L family. NDH-1 is composed of 14 different subunits. Subunits NuoA, H, J, K, L, M, N constitute the membrane sector of the complex.

The protein resides in the cell inner membrane. The catalysed reaction is a quinone + NADH + 5 H(+)(in) = a quinol + NAD(+) + 4 H(+)(out). Its function is as follows. NDH-1 shuttles electrons from NADH, via FMN and iron-sulfur (Fe-S) centers, to quinones in the respiratory chain. The immediate electron acceptor for the enzyme in this species is believed to be ubiquinone. Couples the redox reaction to proton translocation (for every two electrons transferred, four hydrogen ions are translocated across the cytoplasmic membrane), and thus conserves the redox energy in a proton gradient. This chain is NADH-quinone oxidoreductase subunit K, found in Leptospira biflexa serovar Patoc (strain Patoc 1 / Ames).